A 455-amino-acid polypeptide reads, in one-letter code: MGLSVVILAAGKGSRMNSNKPKVLQTLAAKTLIEHVVSSVEKLNPDNIVVVTGHLKEQVEDALQGRNITFVYQQQQLGTGHAVLQALPYLKEQKVLILYGDVPLISTEVLENLVDTTNDDDLGVLTAFVENPQGLGRIVRDKFGAVTEIVEEKDANDIQRQIKEINTGIYCVHKNLLQKWLPEIKANNVQKEYYLTDIITFAKADHVSINVTHPINEFEILGVNDRTQLASLERVWQRNVAEKIMAKGVSIADPNRFDVRGNLDVGKDCWIDINVIIKGNVKLGNNVVIGANCILKNCIIEDNVRIKSNSMVDGSIIREGAIVGPFARVRPECDVKEGAVIGNFVEAKKTILGKGSKASHLTYLGDSEIGANCNIGAGVITCNYDGVNKHKTVIGDYAFIGSDSQLIAPVNIGQGATVGAGSTIAKDVPADNLAISRARQRHIDTWQRPVKKTDK.

Residues 1 to 226 form a pyrophosphorylase region; that stretch reads MGLSVVILAA…EFEILGVNDR (226 aa). UDP-N-acetyl-alpha-D-glucosamine-binding positions include 8 to 11, lysine 22, glutamine 73, 78 to 79, 99 to 101, glycine 136, glutamate 151, asparagine 166, and asparagine 224; these read LAAG, GT, and YGD. Aspartate 101 provides a ligand contact to Mg(2+). Asparagine 224 is a Mg(2+) binding site. Positions 227-247 are linker; the sequence is TQLASLERVWQRNVAEKIMAK. The segment at 248-455 is N-acetyltransferase; sequence GVSIADPNRF…WQRPVKKTDK (208 aa). UDP-N-acetyl-alpha-D-glucosamine-binding residues include arginine 330 and lysine 348. The active-site Proton acceptor is the histidine 360. Tyrosine 363 and asparagine 374 together coordinate UDP-N-acetyl-alpha-D-glucosamine. Acetyl-CoA contacts are provided by residues alanine 377, 383-384, serine 402, alanine 420, and arginine 437; that span reads NY.

In the N-terminal section; belongs to the N-acetylglucosamine-1-phosphate uridyltransferase family. The protein in the C-terminal section; belongs to the transferase hexapeptide repeat family. Homotrimer. Mg(2+) serves as cofactor.

The protein resides in the cytoplasm. It catalyses the reaction alpha-D-glucosamine 1-phosphate + acetyl-CoA = N-acetyl-alpha-D-glucosamine 1-phosphate + CoA + H(+). The enzyme catalyses N-acetyl-alpha-D-glucosamine 1-phosphate + UTP + H(+) = UDP-N-acetyl-alpha-D-glucosamine + diphosphate. It participates in nucleotide-sugar biosynthesis; UDP-N-acetyl-alpha-D-glucosamine biosynthesis; N-acetyl-alpha-D-glucosamine 1-phosphate from alpha-D-glucosamine 6-phosphate (route II): step 2/2. The protein operates within nucleotide-sugar biosynthesis; UDP-N-acetyl-alpha-D-glucosamine biosynthesis; UDP-N-acetyl-alpha-D-glucosamine from N-acetyl-alpha-D-glucosamine 1-phosphate: step 1/1. Its pathway is bacterial outer membrane biogenesis; LPS lipid A biosynthesis. Catalyzes the last two sequential reactions in the de novo biosynthetic pathway for UDP-N-acetylglucosamine (UDP-GlcNAc). The C-terminal domain catalyzes the transfer of acetyl group from acetyl coenzyme A to glucosamine-1-phosphate (GlcN-1-P) to produce N-acetylglucosamine-1-phosphate (GlcNAc-1-P), which is converted into UDP-GlcNAc by the transfer of uridine 5-monophosphate (from uridine 5-triphosphate), a reaction catalyzed by the N-terminal domain. The sequence is that of Bifunctional protein GlmU from Francisella tularensis subsp. novicida (strain U112).